The following is a 2395-amino-acid chain: Centrosomal protein of 295 kDa (2395 aa).

The tract at residues 1 to 540 is necessary for centriole targeting and microtubule association; sequence MKRKVMNGKL…KQADHLEVRP (540 aa). S13 carries the post-translational modification Phosphoserine. Coiled coils occupy residues 53 to 84, 114 to 148, 209 to 277, 488 to 538, and 567 to 592; these read QRRN…LEKL, AERK…HIKA, DAHL…KRQT, ARHK…HLEV, and QQNR…VLKE. Disordered regions lie at residues 602-643, 660-681, and 735-764; these read LIPD…PVQP, GHIP…SQER, and SDSQ…LMPE. A Phosphoserine modification is found at S634. Positions 735-750 are enriched in low complexity; the sequence is SDSQQISSEDSENISS. Residues 817-848 adopt a coiled-coil conformation; sequence GQLELQKKVLQERQEAQEKLLSCTQKELEEQT. 3 disordered regions span residues 864–893, 966–986, and 1212–1272; these read SLPS…SMDN, ADTQ…KGLL, and VDPE…SKVT. The span at 1219–1250 shows a compositional bias: polar residues; it reads FQFSPQTQENRSSQQTGFSSFTPSLRQPSCVS. The stretch at 1444–1488 forms a coiled coil; it reads HDDLQALQQQLDVHREAIRSCQDIQEELLLQRLNKLEQRVSSKQI. Phosphoserine is present on S1565. Low complexity predominate over residues 1677 to 1692; the sequence is PWGDSSQGSSSGDQPG. 5 disordered regions span residues 1677–1715, 1819–1845, 1875–1899, 1989–2013, and 2354–2395; these read PWGD…RASK, SEEE…ETQE, ESFS…GSLS, DLSS…SSEK, and NKTP…SQCI. Over residues 1697–1710 the composition is skewed to basic and acidic residues; sequence HAEHSGESLGKELS. The span at 1880 to 1894 shows a compositional bias: basic and acidic residues; sequence QTEHQEQESSSKEEE. The segment at 2329–2395 is ALMS motif; it reads SLGEAFMKRK…TAKRNRSQCI (67 aa). Positions 2376 to 2388 are enriched in basic and acidic residues; that stretch reads HLKEAVSGDETAK.

Interacts (via ALMS motif) with microtubules; this interaction is direct.

The protein resides in the cytoplasm. It localises to the cytoskeleton. It is found in the microtubule organizing center. Its subcellular location is the centrosome. The protein localises to the centriole. The protein resides in the spindle. Functionally, centriole-enriched microtubule-binding protein involved in centriole biogenesis. Essential for the generation of the distal portion of new-born centrioles in a CPAP- and CEP120-mediated elongation dependent manner during the cell cycle S/G2 phase after formation of the initiating cartwheel structure. Required for the recruitment of centriolar proteins, such as POC1B, POC5 and CEP135, into the distal portion of centrioles. Also required for centriole-to-centrosome conversion during mitotic progression, but is dispensable for cartwheel removal or centriole disengagement. Binds to and stabilizes centriolar microtubule. May be involved in ciliogenesis. The polypeptide is Centrosomal protein of 295 kDa (Rattus norvegicus (Rat)).